Consider the following 228-residue polypeptide: UPF0758 protein CLB_3028 (228 aa).

Positions 106 to 228 (KISTPLDVSN…YVSMKEKGTI (123 aa)) constitute an MPN domain. Zn(2+) is bound by residues histidine 177, histidine 179, and aspartate 190. The JAMM motif signature appears at 177 to 190 (HNHPSGDPTPSKED).

This sequence belongs to the UPF0758 family.

The polypeptide is UPF0758 protein CLB_3028 (Clostridium botulinum (strain ATCC 19397 / Type A)).